The sequence spans 376 residues: Lipid-A-disaccharide synthase (376 aa).

This sequence belongs to the LpxB family.

The enzyme catalyses a lipid X + a UDP-2-N,3-O-bis[(3R)-3-hydroxyacyl]-alpha-D-glucosamine = a lipid A disaccharide + UDP + H(+). It functions in the pathway bacterial outer membrane biogenesis; LPS lipid A biosynthesis. Condensation of UDP-2,3-diacylglucosamine and 2,3-diacylglucosamine-1-phosphate to form lipid A disaccharide, a precursor of lipid A, a phosphorylated glycolipid that anchors the lipopolysaccharide to the outer membrane of the cell. The protein is Lipid-A-disaccharide synthase of Coxiella burnetii (strain CbuK_Q154) (Coxiella burnetii (strain Q154)).